Reading from the N-terminus, the 179-residue chain is uncharacterized protein (179 aa).

The next 4 membrane-spanning stretches (helical) occupy residues 9–31 (WILV…VSTL), 41–63 (AFLL…YGSF), 114–136 (AYYG…LLGA), and 146–168 (AFWG…NYLM).

The protein resides in the cell membrane. This is an uncharacterized protein from Aquifex aeolicus (strain VF5).